We begin with the raw amino-acid sequence, 1043 residues long: MKTGCAAGSPGNEWIFFSSDERNTRSRKTMSNRALQRSAVLSAFVLLRAVTGFSGDGKAIWDKKQYVSPVNPSQLFLYDTFPKNFSWGVGTGAFQVEGSWKTDGRGPSIWDRYVYSHLRGVNGTDRSTDSYIFLEKDLLALDFLGVSFYQFSISWPRLFPNGTVAAVNAQGLRYYRALLDSLVLRNIEPIVTLYHWDLPLTLQEEYGGWKNATMIDLFNDYATYCFQTFGDRVKYWITIHNPYLVAWHGFGTGMHAPGEKGNLTAVYTVGHNLIKAHSKVWHNYDKNFRPHQKGWLSITLGSHWIEPNRTDNMEDVINCQHSMSSVLGWFANPIHGDGDYPEFMKTGAMIPEFSEAEKEEVRGTADFFAFSFGPNNFRPSNTVVKMGQNVSLNLRQVLNWIKLEYDDPQILISENGWFTDSYIKTEDTTAIYMMKNFLNQVLQAIKFDEIRVFGYTAWTLLDGFEWQDAYTTRRGLFYVDFNSEQKERKPKSSAHYYKQIIQDNGFPLKESTPDMKGRFPCDFSWGVTESVLKPEFTVSSPQFTDPHLYVWNVTGNRLLYRVEGVRLKTRPSQCTDYVSIKKRVEMLAKMKVTHYQFALDWTSILPTGNLSKVNRQVLRYYRCVVSEGLKLGVFPMVTLYHPTHSHLGLPLPLLSSGGWLNMNTAKAFQDYAELCFRELGDLVKLWITINEPNRLSDMYNRTSNDTYRAAHNLMIAHAQVWHLYDRQYRPVQHGAVSLSLHCDWAEPANPFVDSHWKAAERFLQFEIAWFADPLFKTGDYPSVMKEYIASKNQRGLSSSVLPRFTAKESRLVKGTVDFYALNHFTTRFVIHKQLNTNRSVADRDVQFLQDITRLSSPSRLAVTPWGVRKLLAWIRRNYRDRDIYITANGIDDLALEDDQIRKYYLEKYVQEALKAYLIDKVKIKGYYAFKLTEEKSKPRFGFFTSDFRAKSSVQFYSKLISSSGLPAENRSPACGQPAEDTDCTICSFLVEKKPLIFFGCCFISTLAVLLSITVFHHQKRRKFQKARNLQNIPLKKGHSRVFS.

The Extracellular segment spans residues 1–994 (MKTGCAAGSP…ICSFLVEKKP (994 aa)). 2 glycosyl hydrolase-1 regions span residues 77 to 506 (LYDT…DNGF) and 515 to 965 (MKGR…SSGL). Asn84, Asn122, Asn161, Asn211, Asn262, Asn308, Asn389, Asn552, Asn609, Asn700, Asn704, and Asn837 each carry an N-linked (GlcNAc...) asparagine glycan. A helical transmembrane segment spans residues 995–1015 (LIFFGCCFISTLAVLLSITVF). Topologically, residues 1016–1043 (HHQKRRKFQKARNLQNIPLKKGHSRVFS) are cytoplasmic.

Belongs to the glycosyl hydrolase 1 family. Klotho subfamily. As to quaternary structure, interacts with FGF19; this interaction is direct. Interacts (via C-terminus) with FGF21; this interaction is direct. Interacts with FGFR1 and FGFR4. As to expression, present in liver, muscle and white adipose tissue, but not in kidney (at protein level). Expressed in liver and pancreas, and at lower levels in skin, stomach, skeletal muscle, small intestine and lung.

The protein resides in the cell membrane. Its function is as follows. Contributes to the transcriptional repression of cholesterol 7-alpha-hydroxylase (CYP7A1), the rate-limiting enzyme in bile acid synthesis. Probably inactive as a glycosidase. Increases the ability of FGFR1 and FGFR4 to bind FGF21. The polypeptide is Beta-klotho (Klb) (Mus musculus (Mouse)).